Reading from the N-terminus, the 147-residue chain is uncharacterized protein (147 aa).

It belongs to the MG185/MG260 family.

This is an uncharacterized protein from Mycoplasma pneumoniae (strain ATCC 29342 / M129 / Subtype 1) (Mycoplasmoides pneumoniae).